The sequence spans 398 residues: MSSLVLAINAGSSSLKFQLIRMPEETLVTKGLIERIGIKDSIFTIEVNGEKIKDVKDIKDHEEAINIMLDSFKQHGIIDDINDIAGTGHRVVHGGELFPTSALVTDKVEEQIESLSELAPLHNPANLMGIRAFRKLLPNIPHVAVFDTSFHQSMPEQSYLYSLPYQYYKDYGIRKYGFHGTSHKYVSQRAAEIMNKPIEELRIISCHIGNGASIAAIDGGESIDTSMGFTPLAGVTMGTRSGNIDPALIPFIMQKTGQNAEEVLNVLNKESGLLGISGTSSDLRDLESDAEEGKERAQLALDVFASRIHKYIGSYATRMHGVDVIVFTAGVGENSSTVRAKVLEGLEFMGIYWDPKKNETIRGEEGFINYPHSPVKVIVIPTNEEVMIARDTVKFGEL.

Position 9 (asparagine 9) interacts with Mg(2+). Lysine 16 is a binding site for ATP. Arginine 90 contacts substrate. Catalysis depends on aspartate 147, which acts as the Proton donor/acceptor. ATP is bound by residues 207 to 211 (HIGNG), 282 to 284 (DLR), and 330 to 334 (GVGEN). Glutamate 384 contacts Mg(2+).

It belongs to the acetokinase family. Homodimer. Mg(2+) serves as cofactor. The cofactor is Mn(2+).

Its subcellular location is the cytoplasm. The enzyme catalyses acetate + ATP = acetyl phosphate + ADP. It functions in the pathway metabolic intermediate biosynthesis; acetyl-CoA biosynthesis; acetyl-CoA from acetate: step 1/2. Functionally, catalyzes the formation of acetyl phosphate from acetate and ATP. Can also catalyze the reverse reaction. This chain is Acetate kinase, found in Staphylococcus haemolyticus (strain JCSC1435).